A 171-amino-acid chain; its full sequence is Moubatin (171 aa).

Positions 1–15 (MMLVLTTLIFSFSAS) are cleaved as a signal peptide. Disulfide bonds link Cys23–Cys144, Cys55–Cys166, and Cys118–Cys145.

It belongs to the calycin superfamily. Lipocalin family. Post-translationally, the N-terminus is blocked. As to expression, expressed in salivary glands.

Its subcellular location is the secreted. Functionally, tick salivary platelet aggregation inhibitor that plays an important part in the anti-hemostatic strategy of ticks. Acts by scavenging thromboxane A2 (TXA2), a potent inducer of platelet aggregation and blood vessel constriction. As a consequence, is a specific inhibitor of collagen-induced platelet aggregation. In addition, it also acts as a potent inhibitor of TXA2-mediated vasoconstriction. Has also been found to bind leukotriene B4 (LTB4) (which also derives from arachidonic acid, as TXA2) with affinities in the nanomolar range. It does not interact with complement protein C5. The protein is Moubatin of Ornithodoros moubata (Soft tick).